The sequence spans 622 residues: 1-deoxy-D-xylulose-5-phosphate synthase (622 aa).

Thiamine diphosphate is bound by residues His-80 and 121–123 (GHS). Asp-152 serves as a coordination point for Mg(2+). Thiamine diphosphate is bound by residues 153 to 154 (GA), Asn-181, Tyr-288, and Glu-370. A Mg(2+)-binding site is contributed by Asn-181.

It belongs to the transketolase family. DXPS subfamily. As to quaternary structure, homodimer. Mg(2+) is required as a cofactor. Requires thiamine diphosphate as cofactor.

It catalyses the reaction D-glyceraldehyde 3-phosphate + pyruvate + H(+) = 1-deoxy-D-xylulose 5-phosphate + CO2. Its pathway is metabolic intermediate biosynthesis; 1-deoxy-D-xylulose 5-phosphate biosynthesis; 1-deoxy-D-xylulose 5-phosphate from D-glyceraldehyde 3-phosphate and pyruvate: step 1/1. Its function is as follows. Catalyzes the acyloin condensation reaction between C atoms 2 and 3 of pyruvate and glyceraldehyde 3-phosphate to yield 1-deoxy-D-xylulose-5-phosphate (DXP). This Shewanella oneidensis (strain ATCC 700550 / JCM 31522 / CIP 106686 / LMG 19005 / NCIMB 14063 / MR-1) protein is 1-deoxy-D-xylulose-5-phosphate synthase.